A 388-amino-acid polypeptide reads, in one-letter code: MAAFKLADRLATLPPYLFAGIDKVKAEVAARGVDIISLGIGDPDMATPGFIIEAMKEAIARPANHQYPSYVGMLAFRQEVANWYDRRFGVSLDPATEVIGLIGSKEGIAHFPFAFINPGDLVLVCTPNYPVYHIATGFAGGEVQFVPLLEENDFLPDLDAIPEDTWKRAKMIFVNYPNNPTAATAPLGFYEKLVDICRRFDVIIAHDTAYTEIYYDEDNRPPSILSVPGAKDVAIEFHSLSKTYNMTGWRVGMAVGNPTLVAGLGKIKENMDSGIFQAVQEASIVALRDGDDFCRELRGIYRQRRDTVITALHKAGIQCRVPQATFYVWARVPQGHTSADFVTRVLQETGVVVTPGNGFGTPGEGFFRISLTVDNARLEEAVSRIAKL.

Substrate is bound by residues Tyr16 and Gly41. Pyridoxal 5'-phosphate contacts are provided by residues Tyr70, 104–105 (SK), Tyr129, Asn179, Tyr210, and 239–241 (SLS). Substrate contacts are provided by Lys105, Tyr129, and Asn179. An N6-(pyridoxal phosphate)lysine modification is found at Lys242. Arg250 is a binding site for pyridoxal 5'-phosphate. Arg368 contacts substrate.

Belongs to the class-I pyridoxal-phosphate-dependent aminotransferase family. LL-diaminopimelate aminotransferase subfamily. In terms of assembly, homodimer. Pyridoxal 5'-phosphate serves as cofactor.

It carries out the reaction (2S,6S)-2,6-diaminopimelate + 2-oxoglutarate = (S)-2,3,4,5-tetrahydrodipicolinate + L-glutamate + H2O + H(+). It functions in the pathway amino-acid biosynthesis; L-lysine biosynthesis via DAP pathway; LL-2,6-diaminopimelate from (S)-tetrahydrodipicolinate (aminotransferase route): step 1/1. Its function is as follows. Involved in the synthesis of meso-diaminopimelate (m-DAP or DL-DAP), required for both lysine and peptidoglycan biosynthesis. Catalyzes the direct conversion of tetrahydrodipicolinate to LL-diaminopimelate. The protein is LL-diaminopimelate aminotransferase of Nitratidesulfovibrio vulgaris (strain DP4) (Desulfovibrio vulgaris).